A 136-amino-acid polypeptide reads, in one-letter code: MARTKQTARKSTGGKAPRKQLATKAARKSAPATGGVKKPHRYRPGTVALREIRRYQKSTELLIRKLPFQRLVREIAQDFKTDLRFQSSAIGALQEASEAYLVSLFEDTNLAAIHAKRVTIQPKDIHLARRLRGERT.

The interval 1–45 (MARTKQTARKSTGGKAPRKQLATKAARKSAPATGGVKKPHRYRPG) is disordered. Lys5 carries the post-translational modification N6,N6,N6-trimethyllysine; alternate. Lys5 carries the post-translational modification N6,N6-dimethyllysine; alternate. N6-methyllysine; alternate occurs at positions 5 and 10. Lys10 is modified (N6-acetyllysine; alternate). Residue Ser11 is modified to Phosphoserine. Residue Lys15 is modified to N6,N6-dimethyllysine; alternate. 5 positions are modified to N6-methyllysine; alternate: Lys15, Lys19, Lys24, Lys28, and Lys37. N6-acetyllysine; alternate is present on residues Lys15, Lys19, Lys24, Lys28, and Lys37. Lys28 and Lys37 each carry N6,N6,N6-trimethyllysine; alternate. 2 positions are modified to N6,N6-dimethyllysine; alternate: Lys28 and Lys37. Lys57 and Lys65 each carry N6-acetyllysine. Lys80 is subject to N6,N6,N6-trimethyllysine; alternate. Lys80 is modified (N6,N6-dimethyllysine; alternate). Position 80 is an N6-methyllysine; alternate (Lys80).

Belongs to the histone H3 family. As to quaternary structure, the nucleosome is a histone octamer containing two molecules each of H2A, H2B, H3 and H4 assembled in one H3-H4 heterotetramer and two H2A-H2B heterodimers. The octamer wraps approximately 147 bp of DNA. Post-translationally, phosphorylated to form H3S10ph. H3S10ph promotes subsequent H3K14ac formation and is required for transcriptional activation through TBP recruitment to the promoters. Mono-, di- and trimethylated by the COMPASS complex to form H3K4me1/2/3. H3K4me activates gene expression by regulating transcription elongation and plays a role in telomere length maintenance. H3K4me enrichment correlates with transcription levels, and occurs in a 5' to 3' gradient with H3K4me3 enrichment at the 5'-end of genes, shifting to H3K4me2 and then H3K4me1. Methylated by SET2 to form H3K36me. H3K36me represses gene expression. Methylated by DOT1 to form H3K79me. H3K79me is required for association of SIR proteins with telomeric regions and for telomeric silencing. The COMPASS-mediated formation of H3K4me2/3 and the DOT1-mediated formation of H3K79me require H2BK123ub1. In terms of processing, acetylation of histone H3 leads to transcriptional activation. H3K14ac formation by GCN5 is promoted by H3S10ph. H3K14ac can also be formed by ESA1. H3K56ac formation occurs predominantly in newly synthesized H3 molecules during G1, S and G2/M of the cell cycle and may be involved in DNA repair.

The protein localises to the nucleus. It is found in the chromosome. Its function is as follows. Core component of nucleosome. Nucleosomes wrap and compact DNA into chromatin, limiting DNA accessibility to the cellular machineries which require DNA as a template. Histones thereby play a central role in transcription regulation, DNA repair, DNA replication and chromosomal stability. DNA accessibility is regulated via a complex set of post-translational modifications of histones, also called histone code, and nucleosome remodeling. The sequence is that of Histone H3 (H3.1) from Mortierella alpina (Oleaginous fungus).